Consider the following 588-residue polypeptide: Proline--tRNA ligase (588 aa).

It belongs to the class-II aminoacyl-tRNA synthetase family. ProS type 1 subfamily. As to quaternary structure, homodimer.

Its subcellular location is the cytoplasm. The catalysed reaction is tRNA(Pro) + L-proline + ATP = L-prolyl-tRNA(Pro) + AMP + diphosphate. Functionally, catalyzes the attachment of proline to tRNA(Pro) in a two-step reaction: proline is first activated by ATP to form Pro-AMP and then transferred to the acceptor end of tRNA(Pro). As ProRS can inadvertently accommodate and process non-cognate amino acids such as alanine and cysteine, to avoid such errors it has two additional distinct editing activities against alanine. One activity is designated as 'pretransfer' editing and involves the tRNA(Pro)-independent hydrolysis of activated Ala-AMP. The other activity is designated 'posttransfer' editing and involves deacylation of mischarged Ala-tRNA(Pro). The misacylated Cys-tRNA(Pro) is not edited by ProRS. The sequence is that of Proline--tRNA ligase from Corynebacterium efficiens (strain DSM 44549 / YS-314 / AJ 12310 / JCM 11189 / NBRC 100395).